A 323-amino-acid chain; its full sequence is Aldo-keto reductase family 1 member C18 (323 aa).

Residues 20–24 (GFGTY) and Asp50 contribute to the NADP(+) site. Residue Tyr55 is the Proton donor of the active site. Residue His117 participates in substrate binding. NADP(+)-binding positions include 166-167 (SN), Gln190, 216-221 (YGALGT), and 270-280 (KSFNEERIREN).

This sequence belongs to the aldo/keto reductase family. In terms of assembly, monomer. In terms of processing, the N-terminus is blocked. Corpus luteum (large luteal cells).

The protein resides in the cytoplasm. It carries out the reaction (17R,20S)-17,20-dihydroxypregn-4-en-3-one + NADP(+) = 17alpha-hydroxyprogesterone + NADPH + H(+). The catalysed reaction is (17R,20S)-17,20-dihydroxypregn-4-en-3-one + NAD(+) = 17alpha-hydroxyprogesterone + NADH + H(+). In terms of biological role, catalyzes the conversion of progesterone into 20-alpha-dihydroprogesterone (20 alpha-OHP). The chain is Aldo-keto reductase family 1 member C18 (Akr1c18) from Rattus norvegicus (Rat).